We begin with the raw amino-acid sequence, 341 residues long: L-threonine 3-dehydrogenase (341 aa).

C38 is a Zn(2+) binding site. Residues T40 and H43 each act as charge relay system in the active site. H63, E64, C93, C96, C99, and C107 together coordinate Zn(2+). Residues I175, D195, R200, 262 to 264 (LGI), and 286 to 287 (IY) contribute to the NAD(+) site.

This sequence belongs to the zinc-containing alcohol dehydrogenase family. In terms of assembly, homotetramer. The cofactor is Zn(2+).

It is found in the cytoplasm. The enzyme catalyses L-threonine + NAD(+) = (2S)-2-amino-3-oxobutanoate + NADH + H(+). Its pathway is amino-acid degradation; L-threonine degradation via oxydo-reductase pathway; glycine from L-threonine: step 1/2. Catalyzes the NAD(+)-dependent oxidation of L-threonine to 2-amino-3-ketobutyrate. The polypeptide is L-threonine 3-dehydrogenase (Shigella dysenteriae serotype 1 (strain Sd197)).